A 294-amino-acid chain; its full sequence is Very long chain fatty acid elongase 5 (294 aa).

7 consecutive transmembrane segments (helical) span residues 26–46 (WLLLDNYLPTLSFTIIYLLIV), 64–84 (ILVVYNMALTLLSLYMFYELV), 112–132 (VLWWYYFSKLIEFMDTFFFIL), 141–161 (FLHIYHHFTMLNIWWFVMNWV), 172–192 (FNSFIHVLMYSYYGLSAIPAI), 207–227 (LVQFVLTMIQTSCAVVWPCGF), and 231–251 (WLYFQISYMITLIILFSNFYI). A disordered region spans residues 261-294 (AKKDPRHNGIKSVNGHSNGASHTNAVKNRKARTD). Residues 274–286 (NGHSNGASHTNAV) are compositionally biased toward polar residues.

This sequence belongs to the ELO family. ELOVL5 subfamily. Expression is highest in intestine, followed by brain and heart, and lowest in gill. Also expressed in liver, spleen and muscle.

The protein resides in the endoplasmic reticulum membrane. The protein localises to the cell projection. It is found in the dendrite. It catalyses the reaction a very-long-chain acyl-CoA + malonyl-CoA + H(+) = a very-long-chain 3-oxoacyl-CoA + CO2 + CoA. The catalysed reaction is (6Z,9Z,12Z)-octadecatrienoyl-CoA + malonyl-CoA + H(+) = (8Z,11Z,14Z)-3-oxoeicosatrienoyl-CoA + CO2 + CoA. It carries out the reaction (9Z,12Z,15Z)-octadecatrienoyl-CoA + malonyl-CoA + H(+) = (11Z,14Z,17Z)-3-oxoeicosatrienoyl-CoA + CO2 + CoA. The enzyme catalyses (9Z)-hexadecenoyl-CoA + malonyl-CoA + H(+) = 3-oxo-(11Z)-octadecenoyl-CoA + CO2 + CoA. It catalyses the reaction (9Z)-octadecenoyl-CoA + malonyl-CoA + H(+) = 3-oxo-(11Z)-eicosenoyl-CoA + CO2 + CoA. The catalysed reaction is (11Z)-octadecenoyl-CoA + malonyl-CoA + H(+) = 3-oxo-(13Z)-eicosenoyl-CoA + CO2 + CoA. It carries out the reaction (9Z,12Z)-octadecadienoyl-CoA + malonyl-CoA + H(+) = (11Z,14Z)-3-oxoicosa-11,14-dienoyl-CoA + CO2 + CoA. The enzyme catalyses (6Z,9Z,12Z,15Z)-octadecatetraenoyl-CoA + malonyl-CoA + H(+) = (8Z,11Z,14Z,17Z)-3-oxoicosatetraenoyl-CoA + CO2 + CoA. It catalyses the reaction (5Z,8Z,11Z,14Z)-eicosatetraenoyl-CoA + malonyl-CoA + H(+) = (7Z,10Z,13Z,16Z)-3-oxodocosatetraenoyl-CoA + CO2 + CoA. The catalysed reaction is (5Z,8Z,11Z,14Z,17Z)-eicosapentaenoyl-CoA + malonyl-CoA + H(+) = 3-oxo-(7Z,10Z,13Z,16Z,19Z)-docosapentaenoyl-CoA + CO2 + CoA. The protein operates within lipid metabolism; polyunsaturated fatty acid biosynthesis. Catalyzes the first and rate-limiting reaction of the four reactions that constitute the long-chain fatty acids elongation cycle. This endoplasmic reticulum-bound enzymatic process allows the addition of 2 carbons to the chain of long- and very long-chain fatty acids (VLCFAs) per cycle. Condensing enzyme that acts specifically toward polyunsaturated acyl-CoA with the higher activity toward C18:3(n-6) acyl-CoA. May participate in the production of monounsaturated and of polyunsaturated VLCFAs of different chain lengths that are involved in multiple biological processes as precursors of membrane lipids and lipid mediators. In conditions where the essential linoleic and alpha linoleic fatty acids are lacking it is also involved in the synthesis of Mead acid from oleic acid. This is Very long chain fatty acid elongase 5 from Tachysurus fulvidraco (Yellow catfish).